A 311-amino-acid polypeptide reads, in one-letter code: Malate dehydrogenase (311 aa).

Residues 7-13 (GAAGGIG) and Asp34 each bind NAD(+). Substrate-binding residues include Arg81 and Arg87. Residues Asn94 and 117–119 (ITN) each bind NAD(+). Asn119 and Arg153 together coordinate substrate. The active-site Proton acceptor is His177. Met227 serves as a coordination point for NAD(+).

This sequence belongs to the LDH/MDH superfamily. MDH type 1 family. Homodimer.

It catalyses the reaction (S)-malate + NAD(+) = oxaloacetate + NADH + H(+). Its function is as follows. Catalyzes the reversible oxidation of malate to oxaloacetate. This chain is Malate dehydrogenase, found in Shewanella baltica (strain OS155 / ATCC BAA-1091).